A 62-amino-acid chain; its full sequence is Photosystem II reaction center protein Z (62 aa).

2 helical membrane passes run Ala8–Ala28 and Phe41–Ile61.

The protein belongs to the PsbZ family. In terms of assembly, PSII is composed of 1 copy each of membrane proteins PsbA, PsbB, PsbC, PsbD, PsbE, PsbF, PsbH, PsbI, PsbJ, PsbK, PsbL, PsbM, PsbT, PsbY, PsbZ, Psb30/Ycf12, at least 3 peripheral proteins of the oxygen-evolving complex and a large number of cofactors. It forms dimeric complexes.

The protein localises to the plastid. Its subcellular location is the chloroplast thylakoid membrane. Functionally, may control the interaction of photosystem II (PSII) cores with the light-harvesting antenna, regulates electron flow through the 2 photosystem reaction centers. PSII is a light-driven water plastoquinone oxidoreductase, using light energy to abstract electrons from H(2)O, generating a proton gradient subsequently used for ATP formation. The polypeptide is Photosystem II reaction center protein Z (Nicotiana sylvestris (Wood tobacco)).